The sequence spans 217 residues: Protein-L-isoaspartate O-methyltransferase (217 aa).

Ser-67 is an active-site residue.

The protein belongs to the methyltransferase superfamily. L-isoaspartyl/D-aspartyl protein methyltransferase family.

Its subcellular location is the cytoplasm. It carries out the reaction [protein]-L-isoaspartate + S-adenosyl-L-methionine = [protein]-L-isoaspartate alpha-methyl ester + S-adenosyl-L-homocysteine. Functionally, catalyzes the methyl esterification of L-isoaspartyl residues in peptides and proteins that result from spontaneous decomposition of normal L-aspartyl and L-asparaginyl residues. It plays a role in the repair and/or degradation of damaged proteins. This chain is Protein-L-isoaspartate O-methyltransferase, found in Azoarcus sp. (strain BH72).